The sequence spans 182 residues: Oligoribonuclease (182 aa).

The Exonuclease domain occupies 8 to 171 (LIWLDMEMTG…ADIHESIGEL (164 aa)). The active site involves Y129.

The protein belongs to the oligoribonuclease family.

It localises to the cytoplasm. Functionally, 3'-to-5' exoribonuclease specific for small oligoribonucleotides. In Azoarcus sp. (strain BH72), this protein is Oligoribonuclease.